The primary structure comprises 1705 residues: Clathrin heavy chain 1 (1705 aa).

Ala-2 is subject to N-acetylalanine. A globular terminal domain region spans residues 2 to 492; the sequence is AAANAPIIMK…VDNDLALKIY (491 aa). WD40-like repeat regions lie at residues 25–67, 68–113, 114–155, 156–205, 206–270, 271–314, and 315–343; these read FITF…RPIT, ADSA…MPEQ, VAFW…ANLA, NNQI…QALE, AHAA…PDFA, DDFP…ISPD, and PIFL…ATVN. Residues 462-478 are binding site for the uncoating ATPase, involved in lattice disassembly; it reads ENWLAEDKLECSEELGD. A flexible linker region spans residues 493 to 536; sequence IKARATPKVVAAFAERREFDKILIYSKQVGYTPDYMFLLQTILR. The distal segment stretch occupies residues 537–648; sequence TDPQGAVNFA…QSLKHYSELP (112 aa). The heavy chain arm stretch occupies residues 537-1705; that stretch reads TDPQGAVNFA…PYGMPPMGGY (1169 aa). 7 CHCR repeats span residues 551–697, 700–842, 847–986, 993–1138, 1142–1283, 1288–1434, and 1437–1580; these read QMEG…QIIV, CKEY…PEDF, ILSV…QLID, LPES…VSDA, FIRA…FRLA, LNII…DIIN, and LNVL…KECF. The interval 653-1705 is proximal segment; it reads VIVNTHAIEP…PYGMPPMGGY (1053 aa). The segment at 1227–1536 is involved in binding clathrin light chain; that stretch reads AAKIIYAFIS…YIYKKAGRWK (310 aa). The interval 1564–1705 is trimerization; sequence AEQLLVYFIE…PYGMPPMGGY (142 aa).

Belongs to the clathrin heavy chain family. Clathrin triskelions, composed of 3 heavy chains and 3 light chains, are the basic subunits of the clathrin coat. Interacts with SCYL2B.

It localises to the cytoplasmic vesicle membrane. It is found in the membrane. Its subcellular location is the coated pit. In terms of biological role, clathrin is the major protein of the polyhedral coat of coated pits and vesicles. Mediates endocytosis and is required for a correct polar distribution of PIN auxin transporters. The protein is Clathrin heavy chain 1 of Arabidopsis thaliana (Mouse-ear cress).